Reading from the N-terminus, the 1007-residue chain is Protocadherin alpha-C2 (1007 aa).

Residues 1–42 (MEQAGTRPAATEHPRLRRPMPWLLLLPLLLLLLLLLPGPAAS) form the signal peptide. Cadherin domains are found at residues 43-148 (QLRY…SPRF), 149-257 (PRPN…SPAF), 258-365 (DQST…APEV), 374-469 (VPEN…PPSF), and 470-579 (LEDS…APHI). The Extracellular portion of the chain corresponds to 43–708 (QLRYSVPEEQ…RTYSEITLYL (666 aa)). N-linked (GlcNAc...) asparagine glycosylation is found at Asn280 and Asn436. N-linked (GlcNAc...) asparagine glycosylation is found at Asn586 and Asn657. A Cadherin 6 domain is found at 594-691 (VPRTAPAGYL…DRVSKILPDT (98 aa)). Residues 709–729 (IIALSTVSFIFLLTIIILSII) form a helical membrane-spanning segment. Residues 730-1007 (KCYRYTAYGT…GNSTTDNSDQ (278 aa)) are Cytoplasmic-facing. PXXP repeat units lie at residues 856 to 859 (PRQP), 889 to 892 (PGGP), 930 to 933 (PGNP), and 948 to 951 (PGSP). Residues 856 to 951 (PRQPNPDWRY…PDKFIIPGSP (96 aa)) form a 4 X 4 AA repeats of P-X-X-P region. The tract at residues 885–1007 (LRAGPGGPDQ…GNSTTDNSDQ (123 aa)) is disordered. The span at 966 to 980 (DKSDFITFGKKEETK) shows a compositional bias: basic and acidic residues.

It is found in the cell membrane. Functionally, potential calcium-dependent cell-adhesion protein. May be involved in the establishment and maintenance of specific neuronal connections in the brain. In Homo sapiens (Human), this protein is Protocadherin alpha-C2 (PCDHAC2).